The following is a 59-amino-acid chain: Large ribosomal subunit protein bL32 (59 aa).

The interval Met1–Ala25 is disordered.

The protein belongs to the bacterial ribosomal protein bL32 family.

The sequence is that of Large ribosomal subunit protein bL32 from Paraburkholderia phymatum (strain DSM 17167 / CIP 108236 / LMG 21445 / STM815) (Burkholderia phymatum).